A 1214-amino-acid polypeptide reads, in one-letter code: NBPF family member NBPF1 (1214 aa).

A coiled-coil region spans residues 70–128 (MLRNERQFKEEKLAEQLKQAEELRQYKVLVHSQERELTQLREKLREGRDASRSLNQHLQ). The interval 162-200 (LSPENDEDEDEDVQVEEAEKVLESSAPREVQKAEESKVP) is disordered. Acidic residues predominate over residues 165–177 (ENDEDEDEDVQVE). Residues 165–259 (ENDEDEDEDV…ECQDAVNILP (95 aa)) enclose the Olduvai 1 domain. Positions 190 to 200 (EVQKAEESKVP) are enriched in basic and acidic residues. The stretch at 292–399 (NEKLHPQLAE…ASRSLNQHLQ (108 aa)) forms a coiled coil. Positions 433-471 (LSPENDEDEDEDVQVEEAEKVLESSAPREVQKAEESKVP) are disordered. Residues 436–448 (ENDEDEDEDVQVE) show a composition bias toward acidic residues. One can recognise an Olduvai 2 domain in the interval 436–530 (ENDEDEDEDV…ECQDAVNILP (95 aa)). Positions 461-471 (EVQKAEESKVP) are enriched in basic and acidic residues. A coiled-coil region spans residues 610–670 (KSMLRNERQF…ASCSLNQHLQ (61 aa)). Olduvai domains are found at residues 707 to 799 (ENDN…HIIP), 800 to 888 (ENES…ATGP), 891 to 946 (SREL…LDMD), 947 to 1038 (EIEK…PPCP), 1041 to 1114 (SREL…RSTK), and 1116 to 1214 (RRRR…IFPQ). Disordered regions lie at residues 722-746 (EKVQ…EDSL) and 791-837 (WEDA…EGYS). 2 stretches are compositionally biased toward acidic residues: residues 801–810 (NESDDEEEEE) and 821–833 (ESEE…ESWD). Positions 1102-1121 (GKGKKRRGRRSTKKRRRRGR) are enriched in basic residues. Positions 1102-1136 (GKGKKRRGRRSTKKRRRRGRKEGEEDQNPPCPRLS) are disordered.

Belongs to the NBPF family. As to expression, widely expressed. The only tissue which shows a weak expression is kidney.

It is found in the cytoplasm. This is NBPF family member NBPF1 from Homo sapiens (Human).